A 426-amino-acid polypeptide reads, in one-letter code: MKQLRLEPVVQVRGEINIPGSKSISNRALLLATLAQGTTTLTNLLDSDDIRHMLASLKQLGVNYRLSQNNTECELDGLGGVISSESAQELFLGNAGTAMRPLCAALTLGQGEFTLTGEPRMEERPIGDLVDALRQLGANVVYLKNDGFPPLTINATGLSGGDVEIAGDLSSQFLTALLMVAPLAKGSVNIHVKGELVSKPYIDITLALMAQFGVTVINHDYARFEIVAGQQYVSPGKVLVEGDASSASYFLAAGAIKGGEVKVTGVGRLSIQGDVKFADVLEKMGADIEWGDDYIIARGSQLTAVDLDMNHIPDAAMTIATAALFAKGTTVIRNIYNWRIKETDRLAAMATELRKVGAEVEEGNDYIKITPPVVINTAEIDTYNDHRMAMCFSMLAFADCGITINDPDCTSKTFPDYFKQFASLQG.

K22, S23, and R27 together coordinate 3-phosphoshikimate. K22 lines the phosphoenolpyruvate pocket. Phosphoenolpyruvate is bound by residues G96 and R124. The 3-phosphoshikimate site is built by S170, S171, Q172, S198, D314, N337, and K341. Position 172 (Q172) interacts with phosphoenolpyruvate. The active-site Proton acceptor is D314. R345, R387, and K412 together coordinate phosphoenolpyruvate.

It belongs to the EPSP synthase family. In terms of assembly, monomer.

It localises to the cytoplasm. It carries out the reaction 3-phosphoshikimate + phosphoenolpyruvate = 5-O-(1-carboxyvinyl)-3-phosphoshikimate + phosphate. The protein operates within metabolic intermediate biosynthesis; chorismate biosynthesis; chorismate from D-erythrose 4-phosphate and phosphoenolpyruvate: step 6/7. Catalyzes the transfer of the enolpyruvyl moiety of phosphoenolpyruvate (PEP) to the 5-hydroxyl of shikimate-3-phosphate (S3P) to produce enolpyruvyl shikimate-3-phosphate and inorganic phosphate. The chain is 3-phosphoshikimate 1-carboxyvinyltransferase from Shewanella baltica (strain OS185).